The following is a 709-amino-acid chain: MMIARMETSATAAAATSAPRLRLAKRSLFDPMIVRSALPQSLRKLAPRVQARNPVMLVVLVGAVITTLAFLRDLASSTAQENVFNGLVAAFLWFTVLFANFAEAMAEGRGKAQAAALRKVRSETMANRRTAAGNIESVPSSRLDLDDVVEVSAGETIPSDGEIIEGIASVDESAITGESAPVIRESGGDRSAVTGGTVVLSDRIVVRITAKQGQTFIDRMIALVEGAARQQTPNEIALNILLAGLTIIFLLAVVTLQPFAIYSGGGQRVVVLVALLVCLIPTTIGALLSAIGIAGMDRLVQHNVLATSGRAVEAAGDVNTLLLDKTGTITLGNRQATEFVPINGVSAEAVADAAQLSSLADETPEGRSIVVLAKDEFGLRARDEGVMSHARFVPFTAETRMSGVDLAEVSGIRRIRKGAAAAVMKWVRDHGGHPTEEVGAIVDGISSGGGTPLVVAEWTDNSSARAIGVVHLKDIVKVGIRERFDEMRRMSIRTVMITGDNPATAKAIAQEAGVDDFLAEATPEDKLALIKREQQGGRLVAMTGDGTNDAPALAQADVGVAMNTGTQAAREAGNMVDLDSDPTKLIEVVEIGKQLLITRGALTTFSIANDVAKYFAIIPAMFVGLYPVLDKLNVMALHSPRSAILSAVIFNALVIVALIPLALRGVRFRAESASAMLRRNLLIYGLGGLVVPFIGIKLVDLVIVALGVS.

The next 4 helical transmembrane spans lie at 55–75 (VMLV…RDLA), 86–106 (GLVA…EAMA), 236–256 (IALN…VVTL), and 269–289 (VVVL…ALLS). Asp324 (4-aspartylphosphate intermediate) is an active-site residue. ATP contacts are provided by residues Asp361, Glu365, 395–402 (FTAETRMS), and Lys417. 2 residues coordinate Mg(2+): Asp545 and Asp549. The next 3 membrane-spanning stretches (helical) occupy residues 615 to 635 (FAII…LNVM), 643 to 663 (AILS…PLAL), and 688 to 708 (GLVV…ALGV).

It belongs to the cation transport ATPase (P-type) (TC 3.A.3) family. Type IA subfamily. In terms of assembly, the system is composed of three essential subunits: KdpA, KdpB and KdpC.

The protein localises to the cell membrane. The catalysed reaction is K(+)(out) + ATP + H2O = K(+)(in) + ADP + phosphate + H(+). Its function is as follows. Part of the high-affinity ATP-driven potassium transport (or Kdp) system, which catalyzes the hydrolysis of ATP coupled with the electrogenic transport of potassium into the cytoplasm. This subunit is responsible for energy coupling to the transport system and for the release of the potassium ions to the cytoplasm. This chain is Potassium-transporting ATPase ATP-binding subunit, found in Mycobacterium tuberculosis (strain ATCC 25618 / H37Rv).